The chain runs to 344 residues: Dihydroorotase (344 aa).

H13 and H15 together coordinate Zn(2+). Residues 15–17 (HVR) and N41 each bind substrate. The Zn(2+) site is built by K99, H136, and H174. N6-carboxylysine is present on K99. Substrate is bound at residue H136. Residue L219 participates in substrate binding. Position 247 (D247) interacts with Zn(2+). D247 is a catalytic residue. Positions 251 and 263 each coordinate substrate.

The protein belongs to the metallo-dependent hydrolases superfamily. DHOase family. Class II DHOase subfamily. Homodimer. The cofactor is Zn(2+).

The enzyme catalyses (S)-dihydroorotate + H2O = N-carbamoyl-L-aspartate + H(+). The protein operates within pyrimidine metabolism; UMP biosynthesis via de novo pathway; (S)-dihydroorotate from bicarbonate: step 3/3. Catalyzes the reversible cyclization of carbamoyl aspartate to dihydroorotate. This Azoarcus sp. (strain BH72) protein is Dihydroorotase.